A 519-amino-acid polypeptide reads, in one-letter code: Protein amnionless (519 aa).

A signal peptide spans 1–19 (MGAPGRVLLWLQLCALTRA). Residues 20 to 430 (AYKLWVPNTY…NAPGARSDLM (411 aa)) are Extracellular-facing. Asn-35 and Asn-39 each carry an N-linked (GlcNAc...) asparagine glycan. 6 disulfide bridges follow: Cys-43-Cys-152, Cys-193-Cys-267, Cys-259-Cys-265, Cys-277-Cys-303, Cys-288-Cys-304, and Cys-293-Cys-307. The interaction with CUBN stretch occupies residues 67–143 (SDMEELQDRK…VLASGAGFSA (77 aa)). Residues 256–308 (PEACADPSGCVCGNAEVQPWICAALLQPLGGRCPQAACQDALRPEGQCCDLCG) form the VWFC domain. Residues 431–451 (GGLVAALLLLLLVLLVAALLL) traverse the membrane as a helical segment. Over 452 to 519 (RRAGRLRWSR…YGEAEAEAEA (68 aa)) the chain is Cytoplasmic.

As to quaternary structure, interacts (via extracellular region) with CUBN/cubilin, giving rise to a huge complex containing one AMN chain and three CUBN chains. N-glycosylated. Post-translationally, a soluble form arises by proteolytic removal of the membrane anchor. Detected in kidney cortex (at protein level).

It is found in the apical cell membrane. Its subcellular location is the cell membrane. The protein resides in the endosome membrane. The protein localises to the membrane. It localises to the coated pit. In terms of biological role, membrane-bound component of the endocytic receptor formed by AMN and CUBN. Required for normal CUBN glycosylation and trafficking to the cell surface. The complex formed by AMN and CUBN is required for efficient absorption of vitamin B12. Required for normal CUBN-mediated protein transport in the kidney. The polypeptide is Protein amnionless (AMN) (Sus scrofa (Pig)).